We begin with the raw amino-acid sequence, 339 residues long: Lipopolysaccharide glucosyltransferase WaaO (339 aa).

UDP contacts are provided by residues 34–39 (GTDKNF) and 131–132 (DA). Asp131 and Asp133 together coordinate Mg(2+). Short sequence motifs (DXD) lie at residues 131–133 (DAD) and 220–222 (DQD). His265 is a Mg(2+) binding site. 265–271 (HYIGPTK) is a UDP binding site.

Belongs to the glycosyltransferase 8 family. Requires Mg(2+) as cofactor.

It carries out the reaction UDP-glucose + lipopolysaccharide = UDP + alpha-D-glucosyl-lipopolysaccharide.. The enzyme catalyses alpha-D-Gal-(1-&gt;6)-alpha-D-Glc-(1-&gt;3)-[L-alpha-D-Hep-(1-&gt;7)]-4-O-PO3(2-)-L-alpha-D-Hep-(1-&gt;3)-4-O-PO3(2-)-L-alpha-D-Hep-(1-&gt;5)-[alpha-Kdo-(2-&gt;4)]-alpha-Kdo-(2-&gt;6)-lipid A + UDP-alpha-D-glucose = alpha-D-Glc-(1-&gt;3)-[alpha-D-Gal-(1-&gt;6)]-alpha-D-Glc-(1-&gt;3)-[L-alpha-D-Hep-(1-&gt;7)]-4-O-PO3(2-)-L-alpha-D-Hep-(1-&gt;3)-4-O-PO3(2-)-L-alpha-D-Hep-(1-&gt;5)-[alpha-Kdo-(2-&gt;4)]-alpha-Kdo-(2-&gt;6)-lipid A + UDP + H(+). Its pathway is bacterial outer membrane biogenesis; LPS core biosynthesis. Its function is as follows. Glucosyltransferase involved in the biosynthesis of the core oligosaccharide region of lipopolysaccharide (LPS). Catalyzes the addition of a second glucose (glucose II) to the first outer-core glucose (glucose I). In vitro, can add multiple glucose residues to its lipid acceptor. Activity does not require the branched galactose added by WaaB, but it is higher in the presence of this branched galactose. In the absence of a lipid acceptor, can hydrolyze UDP-glucose, but not UDP-galactose. The chain is Lipopolysaccharide glucosyltransferase WaaO from Escherichia coli (strain K12).